The sequence spans 536 residues: Light-independent protochlorophyllide reductase subunit B (536 aa).

Position 36 (D36) interacts with [4Fe-4S] cluster. The active-site Proton donor is D292. Substrate is bound at residue 427–428 (GL). A compositionally biased stretch (low complexity) spans 448–469 (SHLGHLGGHQSQTEQQQSQAAT). A disordered region spans residues 448-489 (SHLGHLGGHQSQTEQQQSQAATNPSTQSNADSSSEESPLWTP). The segment covering 470 to 483 (NPSTQSNADSSSEE) has biased composition (polar residues).

The protein belongs to the ChlB/BchB/BchZ family. In terms of assembly, protochlorophyllide reductase is composed of three subunits; ChlL, ChlN and ChlB. Forms a heterotetramer of two ChlB and two ChlN subunits. It depends on [4Fe-4S] cluster as a cofactor.

It carries out the reaction chlorophyllide a + oxidized 2[4Fe-4S]-[ferredoxin] + 2 ADP + 2 phosphate = protochlorophyllide a + reduced 2[4Fe-4S]-[ferredoxin] + 2 ATP + 2 H2O. Its pathway is porphyrin-containing compound metabolism; chlorophyll biosynthesis (light-independent). In terms of biological role, component of the dark-operative protochlorophyllide reductase (DPOR) that uses Mg-ATP and reduced ferredoxin to reduce ring D of protochlorophyllide (Pchlide) to form chlorophyllide a (Chlide). This reaction is light-independent. The NB-protein (ChlN-ChlB) is the catalytic component of the complex. The polypeptide is Light-independent protochlorophyllide reductase subunit B (Prochlorococcus marinus (strain MIT 9313)).